The sequence spans 118 residues: Large ribosomal subunit protein bL20c (118 aa).

This sequence belongs to the bacterial ribosomal protein bL20 family.

The protein localises to the plastid. It is found in the chloroplast. Binds directly to 23S ribosomal RNA and is necessary for the in vitro assembly process of the 50S ribosomal subunit. It is not involved in the protein synthesizing functions of that subunit. The sequence is that of Large ribosomal subunit protein bL20c from Gracilaria tenuistipitata var. liui (Red alga).